Here is a 558-residue protein sequence, read N- to C-terminus: CTP synthase (558 aa).

Residues Met-1–Leu-270 are amidoligase domain. Residue Ser-13 coordinates CTP. A UTP-binding site is contributed by Ser-13. Residues Ser-14–Ile-19 and Asp-71 contribute to the ATP site. Positions 71 and 144 each coordinate Mg(2+). Residues Asp-151–Glu-153, Lys-191–Gln-196, and Lys-227 contribute to the CTP site. UTP is bound by residues Lys-191–Gln-196 and Lys-227. One can recognise a Glutamine amidotransferase type-1 domain in the interval Thr-295–Lys-547. An L-glutamine-binding site is contributed by Gly-356. Cys-383 functions as the Nucleophile; for glutamine hydrolysis in the catalytic mechanism. Residues Leu-384–Gln-387, Glu-407, and Arg-473 each bind L-glutamine. Residues His-520 and Glu-522 contribute to the active site.

This sequence belongs to the CTP synthase family. As to quaternary structure, homotetramer.

It catalyses the reaction UTP + L-glutamine + ATP + H2O = CTP + L-glutamate + ADP + phosphate + 2 H(+). It carries out the reaction L-glutamine + H2O = L-glutamate + NH4(+). The catalysed reaction is UTP + NH4(+) + ATP = CTP + ADP + phosphate + 2 H(+). It functions in the pathway pyrimidine metabolism; CTP biosynthesis via de novo pathway; CTP from UDP: step 2/2. Allosterically activated by GTP, when glutamine is the substrate; GTP has no effect on the reaction when ammonia is the substrate. The allosteric effector GTP functions by stabilizing the protein conformation that binds the tetrahedral intermediate(s) formed during glutamine hydrolysis. Inhibited by the product CTP, via allosteric rather than competitive inhibition. Functionally, catalyzes the ATP-dependent amination of UTP to CTP with either L-glutamine or ammonia as the source of nitrogen. Regulates intracellular CTP levels through interactions with the four ribonucleotide triphosphates. The sequence is that of CTP synthase from Polynucleobacter necessarius subsp. necessarius (strain STIR1).